The primary structure comprises 974 residues: Collagen alpha-1(I) chain (974 aa).

Residues 1 to 14 (GISVPGPMGPSGPR) show a composition bias toward low complexity. Residues 1-974 (GISVPGPMGP…PGPPGPPGPP (974 aa)) form a disordered region. A 4-hydroxyproline mark is found at Pro-17, Pro-20, Pro-23, Pro-32, Pro-35, Pro-38, Pro-53, Pro-68, Pro-75, and Pro-81. The segment covering 25 to 44 (PQGFQGPPGEPGEPGASGPM) has biased composition (low complexity). The span at 56–73 (NGDDGEAGKPGRPGERRG) shows a compositional bias: basic and acidic residues. The residue at position 84 (Lys-84) is a 5-hydroxylysine; alternate. Lys-84 is a glycosylation site (O-linked (Gal...) hydroxylysine; alternate). The residue at position 90 (Ser-90) is a Phosphoserine. A compositionally biased stretch (low complexity) spans 98–114 (DAGPAGPKGEPGSPGEN). Pro-108, Pro-111, Pro-117, Pro-126, Pro-132, Pro-153, Pro-162, Pro-165, Pro-192, Pro-195, Pro-207, Pro-213, Pro-222, Pro-228, Pro-231, and Pro-245 each carry 4-hydroxyproline. Positions 132 to 150 (PGASGPAGARGNDGATGAA) are enriched in low complexity. A compositionally biased stretch (pro residues) spans 152–164 (PPGPTGPAGPPGF). Residues 198–228 (AGAAGPAGNPGADGQPGAKGANGAPGIAGAP) show a composition bias toward low complexity. Lys-248 carries the 5-hydroxylysine modification. Residues Pro-254, Pro-257, Pro-269, Pro-278, Pro-293, Pro-299, Pro-308, and Pro-314 each carry the 4-hydroxyproline modification. A compositionally biased stretch (gly residues) spans 303–312 (GERGGPGSRG). At Lys-323 the chain carries 5-hydroxylysine. 4-hydroxyproline occurs at positions 328, 337, 343, 349, 358, 361, 370, 379, 385, 397, 406, 415, 418, 436, 454, 460, 466, 472, 484, 493, 505, 520, 527, and 536. Residues 352–378 (KGLTGSPGSPGPDGKTGPPGPAGQDGR) show a composition bias toward low complexity. Over residues 387–406 (ARGQAGVMGFPGPKGAAGEP) the composition is skewed to low complexity. Over residues 504 to 517 (APGNDGAKGDAGAP) the composition is skewed to low complexity. Position 548 is a 5-hydroxylysine (Lys-548). 4-hydroxyproline is present on residues Pro-554, Pro-569, and Pro-575. Residues 581 to 595 (SGPSGPAGPTGARGA) are compositionally biased toward low complexity. At Ser-584 the chain carries Phosphoserine. 4-hydroxyproline is present on residues Pro-596, Pro-602, Pro-605, Pro-614, Pro-620, Pro-638, Pro-647, and Pro-656. Over residues 608–635 (AGFAGPPGADGQPGAKGEPGDAGAKGDA) the composition is skewed to low complexity. The segment covering 637-649 (PPGPAGPTGPPGP) has biased composition (pro residues). Lys-659 bears the 5-hydroxylysine mark. A compositionally biased stretch (low complexity) spans 664–680 (SAGPPGATGFPGAAGRV). Residues Pro-668 and Pro-674 each carry the 4-hydroxyproline modification. The residue at position 682 (Pro-682) is a 3-hydroxyproline. 4-hydroxyproline is present on residues Pro-683, Pro-692, Pro-695, Pro-716, Pro-725, Pro-733, Pro-742, Pro-760, Pro-769, Pro-772, Pro-778, Pro-793, Pro-799, Pro-805, Pro-814, and Pro-820. The span at 709 to 718 (ETGPAGRPGE) shows a compositional bias: low complexity. Positions 730–742 (KGSPGADGPAGAP) are enriched in low complexity. Residues 792–802 (PPGPVGPPGLA) are compositionally biased toward pro residues. Residues 804–826 (PPGESGREGSPGAEGSPGRDGSP) show a composition bias toward low complexity. Positions 828 to 844 (PKGPPGAPGAPGAPGPV) are enriched in pro residues. The residue at position 829 (Lys-829) is a 5-hydroxylysine. Residues Pro-832, Pro-835, and Pro-838 each carry the 4-hydroxyproline modification. A compositionally biased stretch (low complexity) spans 865 to 879 (AGPAGARGPAGPQGP). The span at 880–894 (RGDKGETGEQGDRRG) shows a compositional bias: basic and acidic residues. Lys-883 bears the 5-hydroxylysine mark. Residues Pro-905, Pro-908, Pro-926, and Pro-941 each carry the 4-hydroxyproline modification. Over residues 908–941 (PGEQGPSGASGPAGPRGPPGSAGSPGKDGLNGLP) the composition is skewed to low complexity. 3-hydroxyproline is present on Pro-946. Pro-947 carries the 4-hydroxyproline modification. The segment covering 959 to 974 (VGPPGPPGPPGPPGPP) has biased composition (pro residues). 3-hydroxyproline is present on Pro-961. At Pro-962 the chain carries 4-hydroxyproline. Residue Pro-964 is modified to 3-hydroxyproline. Residue Pro-965 is modified to 4-hydroxyproline. 3-hydroxyproline is present on Pro-967. A 4-hydroxyproline mark is found at Pro-968, Pro-971, and Pro-974.

The protein belongs to the fibrillar collagen family. Trimers of one alpha 2(I) and two alpha 1(I) chains. In terms of processing, contains mostly 4-hydroxyproline. Proline residues at the third position of the tripeptide repeating unit (G-X-Y) are hydroxylated in some or all of the chains. Contains 3-hydroxyproline at a few sites. This modification occurs on the first proline residue in the sequence motif Gly-Pro-Hyp, where Hyp is 4-hydroxyproline. Post-translationally, lysine residues at the third position of the tripeptide repeating unit (G-X-Y) are 5-hydroxylated in some or all of the chains. In terms of processing, O-glycosylated on hydroxylated lysine residues. The O-linked glycan consists of a Glc-Gal disaccharide. As to expression, expressed in bones.

The protein resides in the secreted. Its subcellular location is the extracellular space. It is found in the extracellular matrix. Its function is as follows. Type I collagen is a member of group I collagen (fibrillar forming collagen). This chain is Collagen alpha-1(I) chain, found in Scelidodon sp. (strain SLP-2019) (South American ground sloth).